Consider the following 396-residue polypeptide: Acetate kinase (396 aa).

N8 provides a ligand contact to Mg(2+). K15 is a binding site for ATP. A substrate-binding site is contributed by R89. Residue D146 is the Proton donor/acceptor of the active site. ATP-binding positions include 206 to 210 (HIGNG), 283 to 285 (DMR), and 331 to 335 (GVGEN). E383 contributes to the Mg(2+) binding site.

Belongs to the acetokinase family. In terms of assembly, homodimer. It depends on Mg(2+) as a cofactor. The cofactor is Mn(2+).

The protein localises to the cytoplasm. It carries out the reaction acetate + ATP = acetyl phosphate + ADP. It functions in the pathway metabolic intermediate biosynthesis; acetyl-CoA biosynthesis; acetyl-CoA from acetate: step 1/2. Catalyzes the formation of acetyl phosphate from acetate and ATP. Can also catalyze the reverse reaction. The polypeptide is Acetate kinase (Streptococcus pneumoniae (strain JJA)).